Here is a 562-residue protein sequence, read N- to C-terminus: Probable malate:quinone oxidoreductase (562 aa).

A disordered region spans residues 530 to 562 (EVPDKSATPTDPTIAPKHQHSTTHNANSEMQAL). A compositionally biased stretch (polar residues) spans 551-562 (TTHNANSEMQAL).

It belongs to the MQO family. Requires FAD as cofactor.

The catalysed reaction is (S)-malate + a quinone = a quinol + oxaloacetate. The protein operates within carbohydrate metabolism; tricarboxylic acid cycle; oxaloacetate from (S)-malate (quinone route): step 1/1. This is Probable malate:quinone oxidoreductase from Xylella fastidiosa (strain M12).